A 308-amino-acid polypeptide reads, in one-letter code: Dipeptide transport system permease protein DppB (308 aa).

7 helical membrane-spanning segments follow: residues 10-30, 59-79, 100-120, 131-151, 168-188, 228-248, and 278-298; these read WAMA…MKVI, LIFQ…GPSI, LGMT…VIAA, AMSL…TLLI, SPIH…AIIA, MPVI…SFVI, and VFYS…YGLL. One can recognise an ABC transmembrane type-1 domain in the interval 94-295; the sequence is FPVSFELGMT…IMLFLVDLAY (202 aa).

The protein belongs to the binding-protein-dependent transport system permease family. OppBC subfamily.

It is found in the cell membrane. In terms of biological role, probably part of the ABC transporter DppBCDE involved in dipeptide transport. Responsible for the translocation of the substrate across the membrane. This Bacillus subtilis (strain 168) protein is Dipeptide transport system permease protein DppB (dppB).